The sequence spans 130 residues: Small ribosomal subunit protein uS8 (130 aa).

The protein belongs to the universal ribosomal protein uS8 family. Part of the 30S ribosomal subunit.

One of the primary rRNA binding proteins, it binds directly to 16S rRNA central domain where it helps coordinate assembly of the platform of the 30S subunit. The sequence is that of Small ribosomal subunit protein uS8 from Halorubrum lacusprofundi (strain ATCC 49239 / DSM 5036 / JCM 8891 / ACAM 34).